A 241-amino-acid chain; its full sequence is Ribonuclease PH (241 aa).

Residues Arg87 and Gly125–Arg127 contribute to the phosphate site.

The protein belongs to the RNase PH family. In terms of assembly, homohexameric ring arranged as a trimer of dimers.

The catalysed reaction is tRNA(n+1) + phosphate = tRNA(n) + a ribonucleoside 5'-diphosphate. In terms of biological role, phosphorolytic 3'-5' exoribonuclease that plays an important role in tRNA 3'-end maturation. Removes nucleotide residues following the 3'-CCA terminus of tRNAs; can also add nucleotides to the ends of RNA molecules by using nucleoside diphosphates as substrates, but this may not be physiologically important. Probably plays a role in initiation of 16S rRNA degradation (leading to ribosome degradation) during starvation. In Nitrosomonas europaea (strain ATCC 19718 / CIP 103999 / KCTC 2705 / NBRC 14298), this protein is Ribonuclease PH.